The chain runs to 268 residues: Unknown seed protein 30.1 (268 aa).

The N-terminal stretch at 1–22 (MEFAHLTVLSLFCLAFVGITAT) is a signal peptide. The region spanning 68–259 (LFFEHDLHPR…GNKAAAWVPN (192 aa)) is the BURP domain.

In Vicia faba (Broad bean), this protein is Unknown seed protein 30.1.